We begin with the raw amino-acid sequence, 149 residues long: D-aminoacyl-tRNA deacylase (149 aa).

The Gly-cisPro motif, important for rejection of L-amino acids motif lies at 137–138 (GP).

It belongs to the DTD family. In terms of assembly, homodimer.

It is found in the cytoplasm. The enzyme catalyses glycyl-tRNA(Ala) + H2O = tRNA(Ala) + glycine + H(+). The catalysed reaction is a D-aminoacyl-tRNA + H2O = a tRNA + a D-alpha-amino acid + H(+). In terms of biological role, an aminoacyl-tRNA editing enzyme that deacylates mischarged D-aminoacyl-tRNAs. Also deacylates mischarged glycyl-tRNA(Ala), protecting cells against glycine mischarging by AlaRS. Acts via tRNA-based rather than protein-based catalysis; rejects L-amino acids rather than detecting D-amino acids in the active site. By recycling D-aminoacyl-tRNA to D-amino acids and free tRNA molecules, this enzyme counteracts the toxicity associated with the formation of D-aminoacyl-tRNA entities in vivo and helps enforce protein L-homochirality. This Halothermothrix orenii (strain H 168 / OCM 544 / DSM 9562) protein is D-aminoacyl-tRNA deacylase.